The primary structure comprises 181 residues: MSLPMTETVTDPAETAPPTAERSYPRFAKPQRVAFVQSSWHRDVVAGCWESFVREIVERGIVASQVDLFEVPGSFEIPLHVQMLAKTRRYTAIVAAGLVVDDGLTGFVAQTVIQALMDVQLKTEVPVFSAVATPHSFERGSPNTEHFRQHFATKGADVAHACADTLLSLERLRGQVAAGIV.

The interval 1-23 is disordered; that stretch reads MSLPMTETVTDPAETAPPTAERS. 5-amino-6-(D-ribitylamino)uracil is bound by residues Trp-40, 74–76, 98–100, and Ser-129; these read SFE and LVV.

It belongs to the DMRL synthase family.

It catalyses the reaction (2S)-2-hydroxy-3-oxobutyl phosphate + 5-amino-6-(D-ribitylamino)uracil = 6,7-dimethyl-8-(1-D-ribityl)lumazine + phosphate + 2 H2O + H(+). It functions in the pathway cofactor biosynthesis; riboflavin biosynthesis; riboflavin from 2-hydroxy-3-oxobutyl phosphate and 5-amino-6-(D-ribitylamino)uracil: step 1/2. Its function is as follows. Catalyzes the formation of 6,7-dimethyl-8-ribityllumazine by condensation of 5-amino-6-(D-ribitylamino)uracil with 3,4-dihydroxy-2-butanone 4-phosphate. This is the penultimate step in the biosynthesis of riboflavin. The polypeptide is 6,7-dimethyl-8-ribityllumazine synthase 2 (Rhodopseudomonas palustris (strain ATCC BAA-98 / CGA009)).